A 366-amino-acid polypeptide reads, in one-letter code: uncharacterized protein (366 aa).

This is an uncharacterized protein from Caenorhabditis elegans.